Consider the following 202-residue polypeptide: Large ribosomal subunit protein eL13 (202 aa).

Belongs to the eukaryotic ribosomal protein eL13 family.

This Nicotiana tabacum (Common tobacco) protein is Large ribosomal subunit protein eL13 (RPL13).